Consider the following 1563-residue polypeptide: Rab-3-interacting molecule unc-10 (1563 aa).

Residues 7 to 133 (MPDLSHLSAE…AKTGKWFQPE (127 aa)) form the RabBD domain. Basic and acidic residues predominate over residues 25 to 35 (FKRQKDEEAKE). The segment at 25 to 50 (FKRQKDEEAKETQISQKASEELSELD) is disordered. Residues 66-121 (TQDDAICQICQKTKFADGIGHKCFYCQLRSCARCGGRAQSKNKAIWACSLCQKRQQ) form an FYVE-type zinc finger. 8 residues coordinate Zn(2+): Cys-72, Cys-75, Cys-88, Cys-91, Cys-96, Cys-99, Cys-113, and Cys-116. Disordered regions lie at residues 128–466 (KWFQ…DHLN) and 582–605 (GGLD…RNDH). Residues 172-182 (NTPNYQNNQQP) are compositionally biased toward polar residues. Composition is skewed to low complexity over residues 190–284 (NHNQ…RNQT) and 300–316 (QTPQ…VGAA). The span at 326-345 (QEQHHQQMNEQRTDNNRMRE) shows a compositional bias: basic and acidic residues. 2 stretches are compositionally biased toward polar residues: residues 356-367 (RQPSLEQTTPMN) and 379-389 (QRPTFYTGNSE). A compositionally biased stretch (low complexity) spans 395–415 (FDGQMQQGSQQNNQNQNQNNR). Positions 643–733 (HMILHRTENS…DTSVELIVSR (91 aa)) constitute a PDZ domain. In terms of domain architecture, C2 1 spans 840–962 (IFGRIEVSFV…PLDGEHSLMC (123 aa)). 3 disordered regions span residues 1054-1163 (ENDI…YLGD), 1177-1311 (GQMT…GGSA), and 1346-1373 (VGIP…KEST). Polar residues predominate over residues 1086–1097 (WTQNHQRQSGYT). Positions 1112-1121 (YNRRQQRRPR) are enriched in basic residues. A compositionally biased stretch (basic and acidic residues) spans 1129–1154 (MEREDMYDPTRKHRDDNEYSMRESVR). Residues 1181–1230 (PKQHNQQHQPHPLSQAHQQQQTAGVQPQHHQGFQQQQHPQQPNQQMQQMQ) are compositionally biased toward low complexity. Residues 1242–1255 (GSETLSVHSTNSMP) show a composition bias toward polar residues. The segment covering 1256 to 1277 (TTMTTVNRRNMNANNTSNDNTS) has biased composition (low complexity). A compositionally biased stretch (polar residues) spans 1278–1288 (FAETPTANTNR). Low complexity predominate over residues 1297–1311 (NSLASSSSVAGGGSA). A C2 2 domain is found at 1417–1536 (VLGEIQIALM…LGSQPLIGWY (120 aa)).

In terms of tissue distribution, restricted to discrete puncta in synapse-rich regions of the nervous system including the nerve ring, the ventral nerve cord and the dorsal nerve cord. Localized expression was found in the head.

It localises to the synapse. Its function is as follows. Regulates the efficiency of a post-docking step of the release pathway. Acts after vesicle docking likely via regulating priming. May regulate the conformational changes in syntaxin. Binding of vesicles via rab-3[GTP] to Rim may signal the presence of a docked synaptic vesicle. Rim may then signal to unc-13 to change the conformation of syntaxin from the closed to the open state. Syntaxin could then engage synaptobrevin on the docked vesicle to form SNARE complexes and to prime the vesicle for release. Not required for the development or the structural organization of synapses. May play a role in regulating entry into the dauer state. This Caenorhabditis elegans protein is Rab-3-interacting molecule unc-10.